A 50-amino-acid polypeptide reads, in one-letter code: Nosiheptide precursor (50 aa).

Positions 38 to 39 (SC) form a cross-link, thiazole-4-carboxylic acid (Ser-Cys). Residues 38–46 (SCTTCECCC) constitute a cross-link (3-hydroxypyridine-2,5-dicarboxylic acid (Ser-Cys) (with S-47)). Positions 38-47 (SCTTCECCCS) form a cross-link, 3-hydroxypyridine-2,5-dicarboxylic acid (Ser-Ser) (with C-46). The thiazole-4-carboxylic acid (Thr-Cys) cross-link spans 41–42 (TC). Glu-43 carries the 4-hydroxyglutamate modification. Positions 43 to 44 (EC) form a cross-link, thiazole-4-carboxylic acid (Glu-Cys). A cross-link (2-(cystein-S-ylcarbonyl)-3-methyl-4-(glutam-5-yloxy)methylindole (Glu-Cys)) is located at residues 43–45 (ECC). Positions 45–46 (CC) form a cross-link, thiazole-4-carboxylic acid (Cys-Cys). Positions 47–48 (SC) form a cross-link, thiazole-4-carboxylic acid (Ser-Cys). Ser-49 carries the post-translational modification 2,3-didehydroalanine (Ser). At Ser-49 the chain carries Serine amide; atypical.

The protein belongs to the thiocillin family. Post-translationally, the amidation of Ser-49 is produced by the oxidative cleavage of Ser-50 rather than of a glycine, as in eukaryotes.

Functionally, inhibits bacterial protein biosynthesis by binding to ribosomes. Specifically, binds to the complex of 23S rRNA and ribosomal protein L11 (RPLK) in the 50S ribosomal subunit. While allowing a weak binding of elongation factor G (EF-G) to the ribosome and subsequent GTP-hydrolysis, probably impairs conformational changes in both the ribosome and EF-G which are necessary for translocation. In vitro, inhibits Gram-positive bacteria S.aureus strain 209P (MIC=0.0009 ug/ml), S.aureus strain 133 (MIC=0.0019 ug/ml), S.aureus strain B3 (MIC=0.003 ug/ml), S.aureus strain Hb (MIC=0.003 ug/ml), M.citreus strain ATCC 8411 (MIC=0.0038 ug/ml), M.lysodeikticus strain ATCC 4698 (MIC=0.003 ug/ml), S.lutea strain ATCC 9341 (MIC=0.0011 ug/ml), S.faecalis strain ATCC 9790 (MIC=0.0007 ug/ml), S.viridans (MIC=0.0065 ug/ml), S.pyogenes hemolyticus strain Dig7 (MIC=0.00028 ug/ml), D.pneumoniae strain Til (MIC=0.00015 ug/ml), N.catrrhalis (MIC=0.0017 ug/ml), L.casei strain ATCC 6633 (MIC=0.003 ug/ml), B.cereus strain ATCC 6630 (MIC=0.0071 ug/ml) and various isolates of L.monocytogenes. In vitro, inhibits Gram-negative bacterium P.multocida strain A125 (MIC=0.0024 ug/ml) but not M.smegmatis strain ATCC 6630, S.typhimurium, A.aerogenes strain ATCC 8308, P.vulgaris, K.pneumoniae strain ATCC 10031, S.marcescens strain A476, P.aeruginosa strain Bass or B.bronchiseptica strain CN387. Does not inhibit Gram-negative bacterium E.coli strain ATCC 9637 but does inhibit purified ribosomes from E.coli. In vivo, has no systemic effect in mice infected with staphylococci or streptococci when applied orally or subcutaneously. Has a local effect in mice infected subcutaneously or intraperitoneally with staphylococci when applied immediately afterwards. Is not toxic to mice. The protein is Nosiheptide precursor of Streptomyces actuosus.